The primary structure comprises 439 residues: 3-phosphoshikimate 1-carboxyvinyltransferase (439 aa).

3-phosphoshikimate is bound by residues lysine 29, serine 30, and arginine 34. Lysine 29 lines the phosphoenolpyruvate pocket. 2 residues coordinate phosphoenolpyruvate: glycine 100 and arginine 128. 3-phosphoshikimate-binding residues include serine 173, serine 174, glutamine 175, serine 201, aspartate 321, and lysine 348. Glutamine 175 serves as a coordination point for phosphoenolpyruvate. Aspartate 321 serves as the catalytic Proton acceptor. Arginine 352 and arginine 395 together coordinate phosphoenolpyruvate.

This sequence belongs to the EPSP synthase family. In terms of assembly, monomer.

It is found in the cytoplasm. The enzyme catalyses 3-phosphoshikimate + phosphoenolpyruvate = 5-O-(1-carboxyvinyl)-3-phosphoshikimate + phosphate. It functions in the pathway metabolic intermediate biosynthesis; chorismate biosynthesis. Functionally, catalyzes the transfer of the enolpyruvyl moiety of phosphoenolpyruvate (PEP) to the 5-hydroxyl of shikimate-3-phosphate (S3P) to produce enolpyruvyl shikimate-3-phosphate and inorganic phosphate. In Halobacterium salinarum (strain ATCC 700922 / JCM 11081 / NRC-1) (Halobacterium halobium), this protein is 3-phosphoshikimate 1-carboxyvinyltransferase.